A 423-amino-acid polypeptide reads, in one-letter code: Transmembrane protein 130 (423 aa).

The first 24 residues, 1–24 (MAQAVWSRLGRILWLSCLLPWAPA), serve as a signal peptide directing secretion. Residues 25–339 (GVAAGLYELN…IQVWPSRIQP (315 aa)) lie on the Extracellular side of the membrane. N-linked (GlcNAc...) asparagine glycosylation is found at N34, N197, and N300. The 87-residue stretch at 147 to 233 (WPSSYLTKTI…AVMQKTGDFS (87 aa)) folds into the PKD domain. The chain crosses the membrane as a helical span at residues 340–360 (AVFAFPCATLITVMLAFIMYM). At 361–423 (TLRNATQQKD…LYKSVKTYTV (63 aa)) the chain is on the cytoplasmic side.

The protein resides in the golgi apparatus membrane. This Pongo abelii (Sumatran orangutan) protein is Transmembrane protein 130 (TMEM130).